We begin with the raw amino-acid sequence, 377 residues long: Alanine racemase (377 aa).

Lys39 (proton acceptor; specific for D-alanine) is an active-site residue. N6-(pyridoxal phosphate)lysine is present on Lys39. Residue Arg137 coordinates substrate. The active-site Proton acceptor; specific for L-alanine is Tyr266. Met314 is a substrate binding site.

This sequence belongs to the alanine racemase family. Requires pyridoxal 5'-phosphate as cofactor.

The enzyme catalyses L-alanine = D-alanine. It participates in amino-acid biosynthesis; D-alanine biosynthesis; D-alanine from L-alanine: step 1/1. Functionally, catalyzes the interconversion of L-alanine and D-alanine. May also act on other amino acids. The sequence is that of Alanine racemase (alr) from Symbiobacterium thermophilum (strain DSM 24528 / JCM 14929 / IAM 14863 / T).